Consider the following 114-residue polypeptide: MGFPIPDPYVWDPSFRTFYSIIDDEHKTLFNGIFHLAIDDNADNLGELRRCTGKHFLNEQVLMQASQYQFYDEHKKEHETFIHALDNWKGDVKWAKSWLVNHIKTIDFKYKGKI.

Residues histidine 26, histidine 55, glutamate 59, histidine 74, histidine 78, histidine 102, and aspartate 107 each coordinate Fe cation.

This sequence belongs to the hemerythrin family. As to quaternary structure, homooctamer.

In terms of biological role, hemerythrin is a respiratory protein in blood cells of certain marine worms. The oxygen-binding site in each chain contains two iron atoms. This chain is Hemerythrin, found in Phascolopsis gouldii (Peanut worm).